The chain runs to 189 residues: Peptidyl-tRNA hydrolase (189 aa).

Tyr14 lines the tRNA pocket. His19 functions as the Proton acceptor in the catalytic mechanism. Residues Tyr64, Asn66, and Asn112 each coordinate tRNA.

Belongs to the PTH family. As to quaternary structure, monomer.

The protein resides in the cytoplasm. It catalyses the reaction an N-acyl-L-alpha-aminoacyl-tRNA + H2O = an N-acyl-L-amino acid + a tRNA + H(+). Its function is as follows. Hydrolyzes ribosome-free peptidyl-tRNAs (with 1 or more amino acids incorporated), which drop off the ribosome during protein synthesis, or as a result of ribosome stalling. In terms of biological role, catalyzes the release of premature peptidyl moieties from peptidyl-tRNA molecules trapped in stalled 50S ribosomal subunits, and thus maintains levels of free tRNAs and 50S ribosomes. This Clostridium botulinum (strain ATCC 19397 / Type A) protein is Peptidyl-tRNA hydrolase.